Consider the following 132-residue polypeptide: Small ribosomal subunit protein uS9 (132 aa).

Residues 100–132 (LKSNGLLTRDDRTKERKKPGLKRARKAPQYTKR) are disordered. Basic residues predominate over residues 114 to 132 (ERKKPGLKRARKAPQYTKR).

The protein belongs to the universal ribosomal protein uS9 family.

This Dehalococcoides mccartyi (strain ATCC BAA-2100 / JCM 16839 / KCTC 5957 / BAV1) protein is Small ribosomal subunit protein uS9.